The following is a 346-amino-acid chain: MTEQLELFDVTIIGGGPAGMYTAFYSGMRDLKTKVLEYNESLGGKILLYPEKVIWDVGGLPPTRGEQLIQQLEKQAKTFEPEIALNQKITSFERDEHQNILLTAENGDRHLTKTLILAMGHGIPVQRKLEIEHADRYEVTNLYYTVQELKTFAGKRVVISGGGDSAVDWANALVPIAESVTVVHRRDMFGGHEKNVANMKASCARILTPHELTDLHGQGDKIDAVTIQHLETGEIERIETDAVIVNHGMKGDLSVLSEWGLKQGEWGLIEVNEKMETNLPGVYAVGDLCTHKSKVRLIAGTFVDGVNALNSAKLYIEPEAEKVAYVSSHNERFKEKNKELQTVGAR.

Residues E37, K45, Y49, I89, P124, D287, and S328 each coordinate FAD.

The protein belongs to the ferredoxin--NADP reductase type 2 family. As to quaternary structure, homodimer. Requires FAD as cofactor.

It carries out the reaction 2 reduced [2Fe-2S]-[ferredoxin] + NADP(+) + H(+) = 2 oxidized [2Fe-2S]-[ferredoxin] + NADPH. This is Ferredoxin--NADP reductase 1 from Bacillus pumilus (strain SAFR-032).